Consider the following 377-residue polypeptide: Short chain dehydrogenase gsfE (377 aa).

NADP(+)-binding residues include Asp89, Gln121, Tyr226, Ala266, and Ser268. Catalysis depends on Tyr226, which acts as the Proton donor.

It belongs to the short-chain dehydrogenases/reductases (SDR) family. Highly divergent.

It catalyses the reaction dehydrogriseofulvin + NADPH + H(+) = griseofulvin + NADP(+). It functions in the pathway secondary metabolite biosynthesis; terpenoid biosynthesis. Its function is as follows. Short chain dehydrogenase; part of the gene cluster that mediates the biosynthesis of griseofulvin, an important antifungal drug that has been in use for a long time for treating dermatophyte infections. The first step of the pathway is the formation of the heptaketide backbone by gsfA which is initiated by priming with acetyl-CoA, followed by sequential condensations of 6 malonyl-CoA units. The resulting benzophenone can undergo a spontaneous dehydration to form norlichexanthone. However, the true precursor for the griseofulvin biosynthesis is not norlichexanthone, but the heptaketide benzophenone that is O-methylated at 3-OH by gsfB to produce griseophenone D which is further methylated at 9-OH by gsfC to yield griseophenone C. Griseophenone C is then substrate of halogenase gsfI which is responsible for the regio-specific chlorination at the C13 position to form griseophenone B. The cytochrome P450 gsfF catalyzes the coupling of orcinol and phloroglucinol rings in griseophenone B to form desmethyl-dehydrogriseofulvin A which is further methylated at 5-OH by gsfD to yield dehydrogriseofulvin. Finally, gsfE performs stereospecific reduction of enone 18 of dehydrogriseofulvin to afford the final product griseofulvin. This chain is Short chain dehydrogenase gsfE, found in Penicillium aethiopicum.